Reading from the N-terminus, the 263-residue chain is Endonuclease 8 (263 aa).

The active-site Schiff-base intermediate with DNA is the Pro2. Glu3 acts as the Proton donor in catalysis. Catalysis depends on Lys53, which acts as the Proton donor; for beta-elimination activity. DNA is bound by residues Gln70, Arg125, and Asn169. Residues 229-263 form an FPG-type zinc finger; it reads KVFHRDGEPCERCGSIIEKTTLSSRPFYWCPGCQH. Arg253 serves as the catalytic Proton donor; for delta-elimination activity.

The protein belongs to the FPG family. Requires Zn(2+) as cofactor.

It catalyses the reaction 2'-deoxyribonucleotide-(2'-deoxyribose 5'-phosphate)-2'-deoxyribonucleotide-DNA = a 3'-end 2'-deoxyribonucleotide-(2,3-dehydro-2,3-deoxyribose 5'-phosphate)-DNA + a 5'-end 5'-phospho-2'-deoxyribonucleoside-DNA + H(+). Involved in base excision repair of DNA damaged by oxidation or by mutagenic agents. Acts as a DNA glycosylase that recognizes and removes damaged bases. Has a preference for oxidized pyrimidines, such as thymine glycol, 5,6-dihydrouracil and 5,6-dihydrothymine. Has AP (apurinic/apyrimidinic) lyase activity and introduces nicks in the DNA strand. Cleaves the DNA backbone by beta-delta elimination to generate a single-strand break at the site of the removed base with both 3'- and 5'-phosphates. The polypeptide is Endonuclease 8 (Escherichia coli (strain K12 / MC4100 / BW2952)).